The sequence spans 81 residues: MAKTVLGIHVTFLTLLFAVLLLNDVMYTPVEKICERASGTWKGICIHSNDCNNQCVKWENAGSGSCHYQFPNYMCFCYFDC.

Residues M1 to E31 form the signal peptide. Intrachain disulfides connect C34-C81, C45-C66, C51-C75, and C55-C77.

Functionally, antimicrobial peptide probably active against fungi like B.sorokiniana, F.oxysporum, F.graminearum, F.avenaceum, B.cinerea, P.beta, P.infestans and P.debaryanum. The protein is Antimicrobial peptide D1 of Stellaria media (Common chickweed).